The primary structure comprises 209 residues: MNSTNTVVYIKVKGKRPQGFLDPPKFEWNGTKERQLWTMVSNLNYSQDQIDWQNLSKIFETPEFFLKKRTYKLFAEHLELLQLQLEKKRDLEKYSNDQVNEGMSDLIHKYIPTLQNDNLLNVSASPLTTERQDSEEVETEVTNEALQHLQTSKILNIHKKTSDSENKPNDKLDKDGINKEMECGSSDDDLSSSLSVSKSALEEALMDRL.

A Phosphoserine modification is found at S104. Positions 156-198 (NIHKKTSDSENKPNDKLDKDGINKEMECGSSDDDLSSSLSVSK) are disordered. Over residues 160–182 (KTSDSENKPNDKLDKDGINKEME) the composition is skewed to basic and acidic residues. Phosphoserine occurs at positions 185 and 186.

It belongs to the ATG29 family. As to quaternary structure, forms a stable complex with ATG17 and ATG31. Interacts directly with ATG31. The ATG17-ATG29-ATG31 complex interacts with the ATG1-ATG13 complex. Note=The interaction with the ATG1-ATG13 complex is induced by starvation.

It localises to the preautophagosomal structure. Functionally, plays a role in autophagy. Functions at the preautophagosomal structure (PAS) in order to form normal autophagosomes under starvation conditions. Also plays a role in mitophagy and regulation of filamentous growth. In Saccharomyces cerevisiae (strain YJM789) (Baker's yeast), this protein is Autophagy-related protein 29 (ATG29).